The primary structure comprises 112 residues: Photosystem II reaction center Psb28 protein (112 aa).

Belongs to the Psb28 family. As to quaternary structure, part of the photosystem II complex.

It is found in the plastid. Its subcellular location is the cyanelle thylakoid membrane. The sequence is that of Photosystem II reaction center Psb28 protein from Cyanophora paradoxa.